The following is a 519-amino-acid chain: MIFTAFILDYWYFTLLFLIAAYFIGKHVYTNYLMRKHHAEPILDVVDDGAFGFKFGFQSLKAKKIGNQIDLLFLKFNEAKHPSIGTFVTRSFGMQFIATKDPENIKAMLATQFNEYTLGQRLNFLAPLLGKGIFTLDGNGWKHSRAMLRPQFSRDQIGHVKMLEPHFQLLKKHIIKNKGTFFDIQELFFRFTVDSATEFLFGESVSSLKDESIGYDQEEIDFAGRKDFAEAFNKSQVYLSTRTLLQLLYWLVNSADFKRCNKIVHKFSDYYIKKALTATPEELEKHSSYIFLYELAKQTRDPIVLRDQSLNILLAGRDTTAGLLSFAVFELGRNPEVWSKLRQEIGHKFGLDSYSRVEDISFELLKLCEYLKAVLNETLRLYPSVPRNARFAAKNTTLPHGGGPDGMSPILVRKGQTVMYSVYALQRDEKYYGKDANEFRPERWFEPEVRKLGWAFLPFNGGPRICLGQQFALTEASYVLARLIQSFETLELSPEAAYPPAKLSHLTMCLFDGTPVRFE.

C466 contacts heme.

This sequence belongs to the cytochrome P450 family. Requires heme as cofactor.

It localises to the membrane. Functionally, together with an NADPH cytochrome P450 the enzyme system catalyzes the terminal hydroxylation as the first step in the assimilation of alkanes and fatty acids. The protein is Cytochrome P450 52A10 (CYP52A10) of Candida maltosa (Yeast).